We begin with the raw amino-acid sequence, 286 residues long: Phosphatidylserine decarboxylase proenzyme (286 aa).

Residues D90, H147, and S252 each act as charge relay system; for autoendoproteolytic cleavage activity in the active site. S252 functions as the Schiff-base intermediate with substrate; via pyruvic acid; for decarboxylase activity in the catalytic mechanism. Residue S252 is modified to Pyruvic acid (Ser); by autocatalysis.

It belongs to the phosphatidylserine decarboxylase family. PSD-B subfamily. Prokaryotic type I sub-subfamily. As to quaternary structure, heterodimer of a large membrane-associated beta subunit and a small pyruvoyl-containing alpha subunit. The cofactor is pyruvate. In terms of processing, is synthesized initially as an inactive proenzyme. Formation of the active enzyme involves a self-maturation process in which the active site pyruvoyl group is generated from an internal serine residue via an autocatalytic post-translational modification. Two non-identical subunits are generated from the proenzyme in this reaction, and the pyruvate is formed at the N-terminus of the alpha chain, which is derived from the carboxyl end of the proenzyme. The autoendoproteolytic cleavage occurs by a canonical serine protease mechanism, in which the side chain hydroxyl group of the serine supplies its oxygen atom to form the C-terminus of the beta chain, while the remainder of the serine residue undergoes an oxidative deamination to produce ammonia and the pyruvoyl prosthetic group on the alpha chain. During this reaction, the Ser that is part of the protease active site of the proenzyme becomes the pyruvoyl prosthetic group, which constitutes an essential element of the active site of the mature decarboxylase.

It localises to the cell membrane. It catalyses the reaction a 1,2-diacyl-sn-glycero-3-phospho-L-serine + H(+) = a 1,2-diacyl-sn-glycero-3-phosphoethanolamine + CO2. It participates in phospholipid metabolism; phosphatidylethanolamine biosynthesis; phosphatidylethanolamine from CDP-diacylglycerol: step 2/2. Functionally, catalyzes the formation of phosphatidylethanolamine (PtdEtn) from phosphatidylserine (PtdSer). The polypeptide is Phosphatidylserine decarboxylase proenzyme (Azotobacter vinelandii (strain DJ / ATCC BAA-1303)).